A 126-amino-acid chain; its full sequence is Aspartate 1-decarboxylase (126 aa).

Ser25 acts as the Schiff-base intermediate with substrate; via pyruvic acid in catalysis. Ser25 bears the Pyruvic acid (Ser) mark. A substrate-binding site is contributed by Thr57. Catalysis depends on Tyr58, which acts as the Proton donor. 73-75 (GAA) is a binding site for substrate.

It belongs to the PanD family. In terms of assembly, heterooctamer of four alpha and four beta subunits. The cofactor is pyruvate. Is synthesized initially as an inactive proenzyme, which is activated by self-cleavage at a specific serine bond to produce a beta-subunit with a hydroxyl group at its C-terminus and an alpha-subunit with a pyruvoyl group at its N-terminus.

Its subcellular location is the cytoplasm. The catalysed reaction is L-aspartate + H(+) = beta-alanine + CO2. The protein operates within cofactor biosynthesis; (R)-pantothenate biosynthesis; beta-alanine from L-aspartate: step 1/1. Its function is as follows. Catalyzes the pyruvoyl-dependent decarboxylation of aspartate to produce beta-alanine. In Photorhabdus laumondii subsp. laumondii (strain DSM 15139 / CIP 105565 / TT01) (Photorhabdus luminescens subsp. laumondii), this protein is Aspartate 1-decarboxylase.